We begin with the raw amino-acid sequence, 316 residues long: Adenine deaminase (316 aa).

3 residues coordinate Zn(2+): His-14, His-16, and His-194. Catalysis depends on Glu-197, which acts as the Proton donor. Zn(2+) is bound at residue Asp-275. Substrate is bound at residue Asp-276.

It belongs to the metallo-dependent hydrolases superfamily. Adenosine and AMP deaminases family. Adenine deaminase type 2 subfamily. Requires Zn(2+) as cofactor.

It carries out the reaction adenine + H2O + H(+) = hypoxanthine + NH4(+). Functionally, catalyzes the hydrolytic deamination of adenine to hypoxanthine. Plays an important role in the purine salvage pathway and in nitrogen catabolism. The chain is Adenine deaminase from Stutzerimonas stutzeri (strain A1501) (Pseudomonas stutzeri).